The following is a 547-amino-acid chain: uncharacterized protein (547 aa).

The Extracellular portion of the chain corresponds to Met1 to Ser21. The helical transmembrane segment at Phe22–Ala42 threads the bilayer. The Cytoplasmic segment spans residues Pro43–Lys58. The chain crosses the membrane as a helical span at residues Leu59–Asp79. The Extracellular portion of the chain corresponds to Arg80–Lys83. The chain crosses the membrane as a helical span at residues Leu84 to Tyr104. Residues Lys105 to Ser110 are Cytoplasmic-facing. A helical transmembrane segment spans residues Thr111–Ala131. The Extracellular portion of the chain corresponds to Ser132–Arg144. Residues Gly145–Leu165 form a helical membrane-spanning segment. Over Cys166–Glu175 the chain is Cytoplasmic. The helical transmembrane segment at His176–Leu196 threads the bilayer. Residues Asp197 to Tyr323 lie on the Extracellular side of the membrane. The residue at position 237 (Ser237) is a Phosphoserine. The disordered stretch occupies residues Leu275–Asn300. The chain crosses the membrane as a helical span at residues Ile324–Val344. The Cytoplasmic segment spans residues Gln345–Leu398. A helical transmembrane segment spans residues Trp399 to Phe419. Over Ser420–Ser437 the chain is Extracellular. The helical transmembrane segment at Val438–Val458 threads the bilayer. Residues Ala459–Thr469 lie on the Cytoplasmic side of the membrane. Residues Leu470–Gly490 form a helical membrane-spanning segment. Residues Arg491–Thr514 lie on the Extracellular side of the membrane. A helical transmembrane segment spans residues Phe515–Tyr535. Over Thr536 to Leu547 the chain is Cytoplasmic.

Its subcellular location is the membrane. This is an uncharacterized protein from Saccharomyces cerevisiae (strain ATCC 204508 / S288c) (Baker's yeast).